Reading from the N-terminus, the 355-residue chain is Peptide chain release factor 1 (355 aa).

Position 231 is an N5-methylglutamine (Q231). Positions 281-291 (ERLAKESEARK) are enriched in basic and acidic residues. Positions 281–302 (ERLAKESEARKSQVGSGDRSER) are disordered.

Belongs to the prokaryotic/mitochondrial release factor family. Methylated by PrmC. Methylation increases the termination efficiency of RF1.

It localises to the cytoplasm. Its function is as follows. Peptide chain release factor 1 directs the termination of translation in response to the peptide chain termination codons UAG and UAA. In Campylobacter jejuni subsp. doylei (strain ATCC BAA-1458 / RM4099 / 269.97), this protein is Peptide chain release factor 1.